Reading from the N-terminus, the 73-residue chain is Defensin-like protein 87 (73 aa).

An N-terminal signal peptide occupies residues 1–27 (MTTKKTSSVVLPLLLVFALILMPMVAG). 3 disulfide bridges follow: C33–C71, C45–C69, and C49–C70.

This sequence belongs to the DEFL family.

It is found in the secreted. The chain is Defensin-like protein 87 from Arabidopsis thaliana (Mouse-ear cress).